The sequence spans 298 residues: Ethanolamine ammonia-lyase small subunit (298 aa).

Adenosylcob(III)alamin contacts are provided by valine 210, glutamate 231, and cysteine 261.

This sequence belongs to the EutC family. The basic unit is a heterodimer which dimerizes to form tetramers. The heterotetramers trimerize; 6 large subunits form a core ring with 6 small subunits projecting outwards. Adenosylcob(III)alamin serves as cofactor.

Its subcellular location is the bacterial microcompartment. The enzyme catalyses ethanolamine = acetaldehyde + NH4(+). It participates in amine and polyamine degradation; ethanolamine degradation. In terms of biological role, catalyzes the deamination of various vicinal amino-alcohols to oxo compounds. Allows this organism to utilize ethanolamine as the sole source of nitrogen and carbon in the presence of external vitamin B12. The polypeptide is Ethanolamine ammonia-lyase small subunit (Salmonella schwarzengrund (strain CVM19633)).